A 158-amino-acid polypeptide reads, in one-letter code: NAD(P)H-quinone oxidoreductase subunit J, chloroplastic (158 aa).

This sequence belongs to the complex I 30 kDa subunit family. As to quaternary structure, NDH is composed of at least 16 different subunits, 5 of which are encoded in the nucleus.

It is found in the plastid. The protein localises to the chloroplast thylakoid membrane. The catalysed reaction is a plastoquinone + NADH + (n+1) H(+)(in) = a plastoquinol + NAD(+) + n H(+)(out). It carries out the reaction a plastoquinone + NADPH + (n+1) H(+)(in) = a plastoquinol + NADP(+) + n H(+)(out). In terms of biological role, NDH shuttles electrons from NAD(P)H:plastoquinone, via FMN and iron-sulfur (Fe-S) centers, to quinones in the photosynthetic chain and possibly in a chloroplast respiratory chain. The immediate electron acceptor for the enzyme in this species is believed to be plastoquinone. Couples the redox reaction to proton translocation, and thus conserves the redox energy in a proton gradient. The polypeptide is NAD(P)H-quinone oxidoreductase subunit J, chloroplastic (Drimys granadensis).